Here is a 72-residue protein sequence, read N- to C-terminus: MERLNSKLYLQNCYIIKENERLRKKAQILNQENQQLLFELKQKLSKTKNSSGSNQGNNNNNNNLSSSSSASG.

The stretch at 14 to 44 forms a coiled coil; sequence YIIKENERLRKKAQILNQENQQLLFELKQKL. The segment at 42 to 72 is disordered; sequence QKLSKTKNSSGSNQGNNNNNNNLSSSSSASG. A compositionally biased stretch (low complexity) spans 49-72; that stretch reads NSSGSNQGNNNNNNNLSSSSSASG.

In terms of assembly, interacts with REV.

Its function is as follows. Competitive inhibitor of the HD-ZIPIII transcription factors in shoot apical meristem (SAM) development. Acts by forming non-functional heterodimers. Part of a negative feedback loop. Essential for proper functioning of stem cells in the SAM. The polypeptide is Protein LITTLE ZIPPER 4 (Arabidopsis thaliana (Mouse-ear cress)).